A 133-amino-acid polypeptide reads, in one-letter code: Small ribosomal subunit protein uS8 (133 aa).

This sequence belongs to the universal ribosomal protein uS8 family. As to quaternary structure, part of the 30S ribosomal subunit. Contacts proteins S5 and S12.

Functionally, one of the primary rRNA binding proteins, it binds directly to 16S rRNA central domain where it helps coordinate assembly of the platform of the 30S subunit. The chain is Small ribosomal subunit protein uS8 from Koribacter versatilis (strain Ellin345).